A 548-amino-acid chain; its full sequence is Guanine nucleotide-binding protein-like 3 (548 aa).

Residues 1–45 (MKRPKLKKGSKRLSCHKRYKIQKKVREHNRKARKEAKKSGTRKQK) are compositionally biased toward basic residues. A disordered region spans residues 1–118 (MKRPKLKKGS…KKNKGTKAAE (118 aa)). Residues 58-114 (AEILQEAQRRRQQEEELKQNRKLERQKEVAKRRKLDEKKKKNSEKREKRDNKKNKGT) adopt a coiled-coil conformation. Over residues 64–107 (AQRRRQQEEELKQNRKLERQKEVAKRRKLDEKKKKNSEKREKRD) the composition is skewed to basic and acidic residues. Residues 125–305 (CRHVNKVLEQ…MLDSPALVVS (181 aa)) form the CP-type G domain. Residues 172–175 (NKAD), 256–263 (ANVGKSSV), and 298–301 (DSPA) contribute to the GTP site. Positions 459–548 (RQLVEPEPIE…DAYDFNTDFV (90 aa)) are disordered. Residues 465–497 (EPIEEELEANDGEEDVEEEHEGSEEEEDEEVEQ) are compositionally biased toward acidic residues. Positions 501 to 523 (SAKEQEVVSAKEQEVVSAKEQDS) are enriched in basic and acidic residues. The segment covering 524-534 (KSAGPSVSFDQ) has biased composition (polar residues).

The protein belongs to the TRAFAC class YlqF/YawG GTPase family.

Its subcellular location is the nucleus. The protein resides in the nucleolus. In terms of biological role, may play a role in regulating cellular proliferation. The sequence is that of Guanine nucleotide-binding protein-like 3 (gnl3) from Xenopus tropicalis (Western clawed frog).